The primary structure comprises 472 residues: uncharacterized protein (472 aa).

Its subcellular location is the mitochondrion. This is an uncharacterized protein from Saccharomyces cerevisiae (strain ATCC 204508 / S288c) (Baker's yeast).